The chain runs to 145 residues: D-aminoacyl-tRNA deacylase (145 aa).

The Gly-cisPro motif, important for rejection of L-amino acids signature appears at 137 to 138 (GP).

The protein belongs to the DTD family. Homodimer.

Its subcellular location is the cytoplasm. The catalysed reaction is glycyl-tRNA(Ala) + H2O = tRNA(Ala) + glycine + H(+). The enzyme catalyses a D-aminoacyl-tRNA + H2O = a tRNA + a D-alpha-amino acid + H(+). In terms of biological role, an aminoacyl-tRNA editing enzyme that deacylates mischarged D-aminoacyl-tRNAs. Also deacylates mischarged glycyl-tRNA(Ala), protecting cells against glycine mischarging by AlaRS. Acts via tRNA-based rather than protein-based catalysis; rejects L-amino acids rather than detecting D-amino acids in the active site. By recycling D-aminoacyl-tRNA to D-amino acids and free tRNA molecules, this enzyme counteracts the toxicity associated with the formation of D-aminoacyl-tRNA entities in vivo and helps enforce protein L-homochirality. This chain is D-aminoacyl-tRNA deacylase, found in Shewanella baltica (strain OS195).